The following is a 292-amino-acid chain: NAC domain-containing protein 96 (292 aa).

Residues 6-158 form the NAC domain; that stretch reads LPPGFRFHPT…AFVLCRVAMK (153 aa). The DNA-binding element occupies 106-164; sequence IGYRKTLVFYKGRAPLGDRSNWIMHEYRLCDDDTSQGSQNLKGAFVLCRVAMKNEIKTN. Residues 171–199 are disordered; the sequence is PSEQTIGSGESSGLSSRVTSPSRDETMPF. Positions 172–191 are enriched in polar residues; it reads SEQTIGSGESSGLSSRVTSP.

As to quaternary structure, interacts with ABF2 and ABF4. In terms of tissue distribution, expressed in roots, rosettes leaves, cauline leaves and stems.

It localises to the nucleus. Functionally, transcriptional activator involved in the positive regulation of abscisic acid (ABA) responsive genes. Acts as a positive factor of ABA-mediated responses. Involved in the transcriptional activation of ABA-inducible genes in response to dehydration and osmotic stresses. Plays a positive role in both stomatal closure and water loss under dehydration stress conditions. Acts synergistically with ABF2 to activate the dehydration stress-response factor RD29A transcription. Binds to the consensus core cis-acting elements 5'-CGTA-3' and 5'-CACG-3' at the RD29A promoter. Involved in hypocotyl graft union formation. Required for the auxin-mediated promotion of vascular tissue proliferation during hypocotyl graft attachment. This is NAC domain-containing protein 96 from Arabidopsis thaliana (Mouse-ear cress).